A 102-amino-acid polypeptide reads, in one-letter code: Small ribosomal subunit protein uS10 (102 aa).

It belongs to the universal ribosomal protein uS10 family. In terms of assembly, part of the 30S ribosomal subunit.

Involved in the binding of tRNA to the ribosomes. The polypeptide is Small ribosomal subunit protein uS10 (Dehalococcoides mccartyi (strain ATCC BAA-2100 / JCM 16839 / KCTC 5957 / BAV1)).